Here is a 468-residue protein sequence, read N- to C-terminus: RUS family member 1 (468 aa).

The residue at position 2 (alanine 2) is an N-acetylalanine. Phosphothreonine is present on threonine 49. Residues 247 to 267 (LLMLPLVSGCPGFSLGCFFFL) form a helical membrane-spanning segment.

The protein belongs to the RUS1 family.

The protein localises to the membrane. The protein is RUS family member 1 (Rusf1) of Pongo abelii (Sumatran orangutan).